Here is a 446-residue protein sequence, read N- to C-terminus: Trigger factor (446 aa).

The PPIase FKBP-type domain occupies 163-248; the sequence is GDIVTIDFKG…VRGIKRKKLA (86 aa). Residues 423-446 are disordered; it reads SKPVPPREQGAAGETAETAEATPA. Positions 432–446 are enriched in low complexity; that stretch reads GAAGETAETAEATPA.

The protein belongs to the FKBP-type PPIase family. Tig subfamily.

The protein localises to the cytoplasm. It catalyses the reaction [protein]-peptidylproline (omega=180) = [protein]-peptidylproline (omega=0). Involved in protein export. Acts as a chaperone by maintaining the newly synthesized protein in an open conformation. Functions as a peptidyl-prolyl cis-trans isomerase. The chain is Trigger factor from Moorella thermoacetica (strain ATCC 39073 / JCM 9320).